The primary structure comprises 389 residues: Tubby-like F-box protein 11 (389 aa).

The 47-residue stretch at 36 to 82 folds into the F-box domain; sequence DYRWSEIPEELLREILIRVEAADGGGWPSRRSVVACAGVCRGWRLLM. The tract at residues 250–289 is disordered; it reads STMEPQGVASEPSEFPLLGTRSTLSRSQSKPLRSSSSHLK. A compositionally biased stretch (low complexity) spans 273–286; that stretch reads LSRSQSKPLRSSSS.

The protein belongs to the TUB family. In terms of tissue distribution, ubiquitous.

In Arabidopsis thaliana (Mouse-ear cress), this protein is Tubby-like F-box protein 11.